Reading from the N-terminus, the 150-residue chain is 3-dehydroquinate dehydratase (150 aa).

Tyr26 functions as the Proton acceptor in the catalytic mechanism. Residues Asn75, His81, and Asp88 each coordinate substrate. The active-site Proton donor is the His101. Substrate contacts are provided by residues 102–103 (LS) and Arg112.

This sequence belongs to the type-II 3-dehydroquinase family. In terms of assembly, homododecamer.

The catalysed reaction is 3-dehydroquinate = 3-dehydroshikimate + H2O. Its pathway is metabolic intermediate biosynthesis; chorismate biosynthesis; chorismate from D-erythrose 4-phosphate and phosphoenolpyruvate: step 3/7. Its function is as follows. Catalyzes a trans-dehydration via an enolate intermediate. The polypeptide is 3-dehydroquinate dehydratase (Shewanella loihica (strain ATCC BAA-1088 / PV-4)).